We begin with the raw amino-acid sequence, 308 residues long: Aspartate carbamoyltransferase catalytic subunit (308 aa).

Carbamoyl phosphate is bound by residues Arg57 and Thr58. Lys86 provides a ligand contact to L-aspartate. The carbamoyl phosphate site is built by Arg107, His135, and Gln138. 2 residues coordinate L-aspartate: Arg167 and Arg228. Positions 267 and 268 each coordinate carbamoyl phosphate.

This sequence belongs to the aspartate/ornithine carbamoyltransferase superfamily. ATCase family. Heterooligomer of catalytic and regulatory chains.

It catalyses the reaction carbamoyl phosphate + L-aspartate = N-carbamoyl-L-aspartate + phosphate + H(+). It participates in pyrimidine metabolism; UMP biosynthesis via de novo pathway; (S)-dihydroorotate from bicarbonate: step 2/3. Functionally, catalyzes the condensation of carbamoyl phosphate and aspartate to form carbamoyl aspartate and inorganic phosphate, the committed step in the de novo pyrimidine nucleotide biosynthesis pathway. This Methanosarcina barkeri (strain Fusaro / DSM 804) protein is Aspartate carbamoyltransferase catalytic subunit.